Consider the following 375-residue polypeptide: Aldehyde reductase FrzD (375 aa).

A61, Q103, and H171 together coordinate FMN. Residue Y176 is the Proton donor of the active site. K223, G294, and R319 together coordinate FMN.

It belongs to the NADH:flavin oxidoreductase/NADH oxidase family. It depends on FMN as a cofactor.

The enzyme catalyses (1S,4S)-4-[(4-hydroxyphenyl)methyl]-2,5-diazaspiro[bicyclo[3.2.1]octane-6,1'-cyclohexane]-2',5'-dien-4'-one + 2 NADPH + 2 H(+) = (1S,4S)-4-[(4-hydroxyphenyl)methyl]-2,5-diazaspiro[bicyclo[3.2.1]octane-6,1'-cyclohexan]-4'-one + 2 NADP(+). The protein operates within alkaloid biosynthesis; ergot alkaloid biosynthesis. In terms of biological role, aldehyde reductase; part of the gene cluster that mediates the biosynthesis of the alkaloid (-)-FR901483, a potent immunosuppressant that shows efficacy in animal models and a probable inhibitor of purine nucleotide biosynthesis by targeting phosphoribosylpyrophosphate amidotransferase (PPAT). Within the pathway, FrzD reduces the dienone portion of the pathway intermediates to cyclohexanone. The biosynthesis of (-)-FR901483 starts with the condensation of two L-tyrosines to yield (S,S)-dityrosyl-piperazine. This process occurs in 3 steps with the non-canonical nonribosomal peptide synthetase FrzA catalyzing the reduction of L-tyrosine into L-tyrosinal, the spontaneous condensation of 2 L-tyrosinal units, and the subsequent reduction by the NmrA-like family domain-containing oxidoreductase FrzB. The cytochrome P450 monooxygenase FrzC then performs coupling between N10 and C1' to morph the piperazine into a 1,4-diazabicyclo[3.2.1]octane spiro-fused to a 2,5-cyclohexadienone. The dienone portion is further reduced to cyclohexanone by the flavin-dependent reductase FrzD. The methyltranserases (MTs) FrzE and FrzF are then involved in the methylation at the C10' amine and the C4 phenolic oxygen, respectively. The order of the two MTs appear to be interchangeable. Cleavage of the C9-N10' bond by the dioxygenase FrzG then leads to formation of a conjugated iminium. In addition to the oxidation of C9, an additional dehydrogenation between C7 and C8 can occur to give a likely shunt product. The next biosynthetic step is the intramolecular aldol condensation catalyzed by the newly identified aldolase FrzH to yield an aza-tricyclic product with the formation of a C9-C3' bond. The short-chain dehydrogenase/reductase FrzI then produces dephospho-(-)-FR901483 that is phosphorylated at C4'-OH into (-)-FR901483 by the phosphotransferase FrzJ. The only unassigned enzyme in the cluster is the second cytochrome P450 monooxygenase FrzL. This chain is Aldehyde reductase FrzD, found in Cladobotryum sp.